We begin with the raw amino-acid sequence, 898 residues long: Metalloprotease StcE (898 aa).

The N-terminal stretch at 1 to 35 (MNTKMNERWRTPMKLKYLSCTILAPLAIGVFSATA) is a signal peptide. The 256-residue stretch at 296–551 (ELLLHTIDIG…QRFFENKAVF (256 aa)) folds into the Peptidase M66 domain. His-446 serves as a coordination point for Zn(2+). Residue Glu-447 is part of the active site. His-450 and His-456 together coordinate Zn(2+).

The cofactor is Zn(2+).

It is found in the secreted. Its activity is regulated as follows. Inhibited by divalent cation chelators such as BPS and EDTA. Functionally, virulence factor that contributes to intimate adherence of enterohemorrhagic E.coli (EHEC) O157:H7 to host cells. Is able to cleave the secreted human mucin 7 (MUC7) and the glycoprotein 340 (DMBT1/GP340). Also cleaves human C1 inhibitor (SERPING1), a regulator of multiple inflammatory pathways, and binds and localizes it to bacterial and host cell surfaces, protecting them from complement-mediated lysis. Therefore, the current model proposes two roles for StcE during infection: it acts first as a mucinase, allowing passage of EHEC through the oral cavity by cleaving the salivary glycoproteins that are responsible for bacterial aggregation. Similarly, in the colon, StcE cleaves the glycoproteins that protect the intestinal epithelial surface, allowing EHEC to come into close contact with host cell membranes. Secondly, it acts as an anti-inflammatory agent by localizing SERPING1 to cell membranes. The chain is Metalloprotease StcE (stcE) from Escherichia coli O157:H7.